The sequence spans 219 residues: Orotate phosphoribosyltransferase (219 aa).

A 5-phospho-alpha-D-ribose 1-diphosphate-binding site is contributed by K26. 34–35 is a binding site for orotate; the sequence is FF. Residues 72–73, R98, K99, K102, H104, and 124–132 each bind 5-phospho-alpha-D-ribose 1-diphosphate; these read YK and DDVITAGTA. 2 residues coordinate orotate: T128 and R156.

It belongs to the purine/pyrimidine phosphoribosyltransferase family. PyrE subfamily. In terms of assembly, homodimer. The cofactor is Mg(2+).

The catalysed reaction is orotidine 5'-phosphate + diphosphate = orotate + 5-phospho-alpha-D-ribose 1-diphosphate. Its pathway is pyrimidine metabolism; UMP biosynthesis via de novo pathway; UMP from orotate: step 1/2. Its function is as follows. Catalyzes the transfer of a ribosyl phosphate group from 5-phosphoribose 1-diphosphate to orotate, leading to the formation of orotidine monophosphate (OMP). In Xanthomonas oryzae pv. oryzae (strain MAFF 311018), this protein is Orotate phosphoribosyltransferase.